The primary structure comprises 887 residues: Alanine--tRNA ligase (887 aa).

Zn(2+)-binding residues include histidine 564, histidine 568, cysteine 676, and histidine 680.

Belongs to the class-II aminoacyl-tRNA synthetase family. The cofactor is Zn(2+).

The protein localises to the cytoplasm. It catalyses the reaction tRNA(Ala) + L-alanine + ATP = L-alanyl-tRNA(Ala) + AMP + diphosphate. In terms of biological role, catalyzes the attachment of alanine to tRNA(Ala) in a two-step reaction: alanine is first activated by ATP to form Ala-AMP and then transferred to the acceptor end of tRNA(Ala). Also edits incorrectly charged Ser-tRNA(Ala) and Gly-tRNA(Ala) via its editing domain. This is Alanine--tRNA ligase from Chelativorans sp. (strain BNC1).